Consider the following 312-residue polypeptide: Methionyl-tRNA formyltransferase (312 aa).

112–115 (SLLP) is a binding site for (6S)-5,6,7,8-tetrahydrofolate.

It belongs to the Fmt family.

The enzyme catalyses L-methionyl-tRNA(fMet) + (6R)-10-formyltetrahydrofolate = N-formyl-L-methionyl-tRNA(fMet) + (6S)-5,6,7,8-tetrahydrofolate + H(+). Attaches a formyl group to the free amino group of methionyl-tRNA(fMet). The formyl group appears to play a dual role in the initiator identity of N-formylmethionyl-tRNA by promoting its recognition by IF2 and preventing the misappropriation of this tRNA by the elongation apparatus. The sequence is that of Methionyl-tRNA formyltransferase from Dehalococcoides mccartyi (strain CBDB1).